A 374-amino-acid chain; its full sequence is F(420)H(2) dehydrogenase subunit D (374 aa).

It belongs to the complex I 49 kDa subunit family. As to quaternary structure, the FPO complex is composed of at least 13 different subunits.

It is found in the cell inner membrane. The catalysed reaction is methanophenazine + reduced coenzyme F420-(gamma-L-Glu)(n) = dihydromethanophenazine + oxidized coenzyme F420-(gamma-L-Glu)(n) + H(+). Functionally, component of the F(420)H(2) dehydrogenase (FPO complex) which is part of the energy-conserving F(420)H(2):heterodisulfide oxidoreductase system. The membrane-bound electron transfer system of the complex plays an important role in the metabolism of methylotrophic methanogens when the organisms grow on methanol or methylamines. Catalyzes the oxidation of methanophenazine to dihydromethanophenazine. It shuttles electrons from F(420)H(2), via FAD and iron-sulfur (Fe-S) centers, to methanophenazine (an electron carrier in the membrane). It couples the redox reaction to proton translocation (for every two electrons transferred, two hydrogen ions are translocated across the cytoplasmic membrane), and thus conserves the redox energy in a proton gradient. It also catalyzes the oxidation of F(420)H(2) with quinones such as 2,3-dimethyl-1,4-naphthoquinone, 2-methyl-1,4-naphthoquinone and tetramethyl-p-benzoquinone. In Methanosarcina mazei (strain ATCC BAA-159 / DSM 3647 / Goe1 / Go1 / JCM 11833 / OCM 88) (Methanosarcina frisia), this protein is F(420)H(2) dehydrogenase subunit D (fpoD).